The primary structure comprises 436 residues: POU domain, class 2, transcription factor 3 (436 aa).

3 disordered regions span residues M1 to D40, Q140 to S186, and A256 to F278. The POU-specific domain occupies D183–E257. The segment covering S258–S275 has biased composition (low complexity). The homeobox DNA-binding region spans K281–N340. The interval L363–N421 is disordered. 2 stretches are compositionally biased toward low complexity: residues S381–G397 and A405–N421.

It belongs to the POU transcription factor family. Class-2 subfamily. As to quaternary structure, interacts (via the POU domain) with POU2AF1 and POU2AF2 in a DNA-dependent manner; this interaction recruits POU2AF2 to chromatin and increases POU2F3 transactivation activity. Specifically expressed in epidermis and cultured keratinocytes.

It localises to the nucleus. Its function is as follows. Transcription factor that binds to the octamer motif (5'-ATTTGCAT-3') and regulates cell type-specific differentiation pathways. Involved in the regulation of keratinocytes differentiation. The POU2F3-POU2AF2/POU2AF3 complex drives the expression of tuft-cell-specific genes, a rare chemosensory cells that coordinate immune and neural functions within mucosal epithelial tissues. This is POU domain, class 2, transcription factor 3 from Homo sapiens (Human).